Consider the following 294-residue polypeptide: ATP synthase gamma chain (294 aa).

It belongs to the ATPase gamma chain family. In terms of assembly, F-type ATPases have 2 components, CF(1) - the catalytic core - and CF(0) - the membrane proton channel. CF(1) has five subunits: alpha(3), beta(3), gamma(1), delta(1), epsilon(1). CF(0) has three main subunits: a, b and c.

The protein resides in the cell inner membrane. Functionally, produces ATP from ADP in the presence of a proton gradient across the membrane. The gamma chain is believed to be important in regulating ATPase activity and the flow of protons through the CF(0) complex. The protein is ATP synthase gamma chain of Nitratiruptor sp. (strain SB155-2).